A 320-amino-acid chain; its full sequence is MHVASALMVEQKGSEAAASSPDVLRAWATQYHMPSESSDAARPALKHAYKPPASDAKGITMALTIIGTWTAVFLHAIFQIRLPTSMDQLHWLPVSEATAQLLGGSSSLLHIAAVFIVLEFLYTGLFITTHDAMHGTIALRNRQLNDLLGNICISLYAWFDYSMLHRKHWEHHNHTGEVGKDPDFHKGNPGLVPWFASFMSSYMSLWQFARLAWWAVVMQMLGAPMANLLVFMAAAPILSAFRLFYFGTYLPHKPGPGPAAGSQVMAWFRAKTSEASDVMSFLTCYHFDLHWEHHRWPFAPWWQLPHCRRLSGRGLVPALA.

It catalyses the reaction echinenone + 2 AH2 + 2 O2 = canthaxanthin + 2 A + 3 H2O. The catalysed reaction is all-trans-beta-carotene + 2 AH2 + 2 O2 = echinenone + 2 A + 3 H2O. The protein operates within carotenoid biosynthesis. Its function is as follows. Involved in the biosynthesis of ketocarotenoids which are powerful anti-oxidative molecules. Catalyzes the conversion of beta-carotene to canthaxanthin via echinenone. The sequence is that of Beta-carotene 4-ketolase 3 from Haematococcus lacustris (Green alga).